The following is a 684-amino-acid chain: Dipeptidyl-peptidase 5 (684 aa).

A signal peptide spans 1-24 (MNKKIFSMMAASIIGSAAMTPSAG). WD repeat units lie at residues 87-127 (DTES…TERR), 220-259 (KPWS…DIYI), and 323-363 (TFDY…GKIR). Catalysis depends on charge relay system residues serine 542, aspartate 627, and histidine 659.

Belongs to the peptidase S9C family. Homodimer.

It localises to the periplasm. Functionally, catalyzes the removal of dipeptides from the N-terminus of oligopeptides. Prefers Ala and hydrophobic residues except Pro at the P1 position, and has no preference for P2 residues. Shows high dipeptidyl peptidase activity toward the synthetic substrates Lys-Ala-, Gly-Phe-, Met-Leu-, and Ser-Tyr-methylcoumaryl-7-amide (MCA), and slowly hydrolyzes Val-Tyr-MCA. Is likely involved in amino acid metabolism and bacterial growth of asaccharolytic P.gingivalis, that utilizes amino acids from extracellular proteinaceous nutrients as energy and carbon sources. The sequence is that of Dipeptidyl-peptidase 5 from Porphyromonas gingivalis (strain ATCC 33277 / DSM 20709 / CIP 103683 / JCM 12257 / NCTC 11834 / 2561).